The chain runs to 122 residues: Large ribosomal subunit protein uL14 (122 aa).

It belongs to the universal ribosomal protein uL14 family. As to quaternary structure, part of the 50S ribosomal subunit. Forms a cluster with proteins L3 and L19. In the 70S ribosome, L14 and L19 interact and together make contacts with the 16S rRNA in bridges B5 and B8.

Functionally, binds to 23S rRNA. Forms part of two intersubunit bridges in the 70S ribosome. This is Large ribosomal subunit protein uL14 from Psychrobacter sp. (strain PRwf-1).